The chain runs to 377 residues: Tryptophan--tRNA ligase, mitochondrial (377 aa).

ATP-binding positions include glutamine 21 and 28–31; that span reads HLGN. Residues 22–31 carry the 'HIGH' region motif; sequence PTSSALHLGN. Aspartate 181 serves as a coordination point for L-tryptophan. ATP is bound by residues 193–195, 242–246, and lysine 245; these read GED and KMSKS. The 'KMSKS' region motif lies at 242–246; it reads KMSKS.

This sequence belongs to the class-I aminoacyl-tRNA synthetase family.

The protein localises to the mitochondrion matrix. It catalyses the reaction tRNA(Trp) + L-tryptophan + ATP = L-tryptophyl-tRNA(Trp) + AMP + diphosphate + H(+). In Dictyostelium discoideum (Social amoeba), this protein is Tryptophan--tRNA ligase, mitochondrial (wars2).